The sequence spans 330 residues: G-protein coupled receptor 157 (330 aa).

At 1 to 15 (MPTPAPPTELLPWER) the chain is on the extracellular side. The chain crosses the membrane as a helical span at residues 16–36 (AVVLLSCVLSALGSGLLVATH). At 37–48 (ALWPDLRSRARR) the chain is on the cytoplasmic side. A helical membrane pass occupies residues 49–69 (LLLFLSLADLLSAASYFYGVL). Topologically, residues 70–87 (QDFAGTSWDCVLQGALST) are extracellular. A helical membrane pass occupies residues 88-108 (FANTSSFFWTVAIALYLYLNI). Residues 109 to 119 (VRATRGPCTDH) are Cytoplasmic-facing. Residues 120–140 (LVWAFHLISWGVPLAITVAAV) form a helical membrane-spanning segment. Topologically, residues 141 to 166 (CLKKIGYDASDVSVGWCWINLEAEDR) are extracellular. Residues 167-187 (VLWMLLTGKLWEMLAYILLPL) traverse the membrane as a helical segment. Residues 188-227 (LYLLVRKHINRAHQALSEYRPIWEGRQLQRGSPTSMADKK) lie on the Cytoplasmic side of the membrane. A helical transmembrane segment spans residues 228 to 250 (LILIPFIFICLRVWSTVRFVLTL). Residues 251–259 (CGSPVVQAP) are Extracellular-facing. Residues 260–282 (VLVVLHGIGNTFQGGANCIMFVL) traverse the membrane as a helical segment. Residues 283–330 (CTRAVRTRLFSLCCCYPRPPTQNPPGASIPPKMGESQESRRTPEVPST) are Cytoplasmic-facing. The interval 303–330 (TQNPPGASIPPKMGESQESRRTPEVPST) is disordered. Over residues 317–330 (ESQESRRTPEVPST) the composition is skewed to basic and acidic residues.

This sequence belongs to the G-protein coupled receptor 2 family.

Its subcellular location is the cell projection. It localises to the cilium membrane. Orphan receptor that promotes neuronal differentiation of radial glial progenitors (RGPs). The activity of this receptor is mediated by a G(q)-protein that activates a phosphatidylinositol-calcium second messenger. The protein is G-protein coupled receptor 157 (Gpr157) of Rattus norvegicus (Rat).